The chain runs to 74 residues: High-potential iron-sulfur protein (74 aa).

C36, C39, C53, and C67 together coordinate [4Fe-4S] cluster.

The protein belongs to the high-potential iron-sulfur protein (HiPIP) family. Homodimer.

Functionally, specific class of high-redox-potential 4Fe-4S ferredoxins. Functions in anaerobic electron transport in most purple and in some other photosynthetic bacteria and in at least one genus (Paracoccus) of halophilic, denitrifying bacteria. This chain is High-potential iron-sulfur protein (hip), found in Rubrivivax gelatinosus (Rhodocyclus gelatinosus).